A 629-amino-acid polypeptide reads, in one-letter code: Citrate (Re)-synthase (629 aa).

The 271-residue stretch at 59-329 folds into the Pyruvate carboxyltransferase domain; sequence IFITDTTFRD…TNGIDTTVIT (271 aa). One can recognise a Cache domain in the interval 497–601; that stretch reads VMQRFIEEYP…GVDIRVEDLV (105 aa).

Belongs to the alpha-IPM synthase/homocitrate synthase family. In terms of assembly, homotetramer. Co(2+) serves as cofactor. The cofactor is Mn(2+).

The enzyme catalyses oxaloacetate + acetyl-CoA + H2O = citrate + CoA + H(+). Inhibited by p-hydroxymercuribenzoate and EDTA. Functionally, catalyzes the condensation of the acetyl group of acetyl-CoA with oxaloacetate to form citrate. The protein is Citrate (Re)-synthase of Syntrophus aciditrophicus (strain SB).